We begin with the raw amino-acid sequence, 170 residues long: Crossover junction endodeoxyribonuclease RuvC (170 aa).

Active-site residues include D11, E71, and D143. Mg(2+) is bound by residues D11, E71, and D143.

Belongs to the RuvC family. In terms of assembly, homodimer which binds Holliday junction (HJ) DNA. The HJ becomes 2-fold symmetrical on binding to RuvC with unstacked arms; it has a different conformation from HJ DNA in complex with RuvA. In the full resolvosome a probable DNA-RuvA(4)-RuvB(12)-RuvC(2) complex forms which resolves the HJ. Requires Mg(2+) as cofactor.

It is found in the cytoplasm. The enzyme catalyses Endonucleolytic cleavage at a junction such as a reciprocal single-stranded crossover between two homologous DNA duplexes (Holliday junction).. The RuvA-RuvB-RuvC complex processes Holliday junction (HJ) DNA during genetic recombination and DNA repair. Endonuclease that resolves HJ intermediates. Cleaves cruciform DNA by making single-stranded nicks across the HJ at symmetrical positions within the homologous arms, yielding a 5'-phosphate and a 3'-hydroxyl group; requires a central core of homology in the junction. The consensus cleavage sequence is 5'-(A/T)TT(C/G)-3'. Cleavage occurs on the 3'-side of the TT dinucleotide at the point of strand exchange. HJ branch migration catalyzed by RuvA-RuvB allows RuvC to scan DNA until it finds its consensus sequence, where it cleaves and resolves the cruciform DNA. In Sinorhizobium fredii (strain NBRC 101917 / NGR234), this protein is Crossover junction endodeoxyribonuclease RuvC.